The following is a 438-amino-acid chain: DNA polymerase IV 1 (438 aa).

The UmuC domain occupies 46-226 (LAHIDCDAFY…KPVTMIWGVG (181 aa)). Residues Asp-50 and Asp-143 each contribute to the Mg(2+) site. Glu-144 is an active-site residue.

Belongs to the DNA polymerase type-Y family. As to quaternary structure, monomer. It depends on Mg(2+) as a cofactor.

The protein resides in the cytoplasm. The catalysed reaction is DNA(n) + a 2'-deoxyribonucleoside 5'-triphosphate = DNA(n+1) + diphosphate. Functionally, poorly processive, error-prone DNA polymerase involved in untargeted mutagenesis. Copies undamaged DNA at stalled replication forks, which arise in vivo from mismatched or misaligned primer ends. These misaligned primers can be extended by PolIV. Exhibits no 3'-5' exonuclease (proofreading) activity. May be involved in translesional synthesis, in conjunction with the beta clamp from PolIII. This Mesorhizobium japonicum (strain LMG 29417 / CECT 9101 / MAFF 303099) (Mesorhizobium loti (strain MAFF 303099)) protein is DNA polymerase IV 1 (dinB1).